The primary structure comprises 346 residues: MSVVDFIQAITENKFGEYVLLGALLVGVFKLTVFILSVTSLLVDLFVLPATNLKTYGAKKGKWAVITGASDGIGKEYAFQLASKGFNVVLVSRTQAKLETLASEIEAKYKVETKVVAFDASTDAEDNYKSLGDAISGLPVTVLINNVGQSHSIPVPFLETENKELQDIITINVTATLKITQTVAPVIAETVSKEKKKVRGLILTMGSFGGLLPTPYLATYSGSKSFLQAWSAALAGELQSQGVDVELVISYLVTSAMSKIRRASLSIPSPKNFVRATLNGIGRRNGAQERYATSTPYWAHALMHFGIDQTVGVYSKLANSLNLNMHKSIRARALKKAARLAAEKKD.

Residues 19–39 (VLLGALLVGVFKLTVFILSVT) traverse the membrane as a helical segment. NADP(+) is bound by residues Val65, Asp119, Asn146, Tyr220, Lys224, Val253, and Ser255. Residue Tyr220 is the Proton donor of the active site. Residue Lys224 is the Lowers pKa of active site Tyr of the active site.

The protein belongs to the short-chain dehydrogenases/reductases (SDR) family.

Its subcellular location is the endoplasmic reticulum membrane. The enzyme catalyses a very-long-chain (3R)-3-hydroxyacyl-CoA + NADP(+) = a very-long-chain 3-oxoacyl-CoA + NADPH + H(+). The protein operates within lipid metabolism; fatty acid biosynthesis. Component of the microsomal membrane bound fatty acid elongation system, which produces the 26-carbon very long-chain fatty acids (VLCFA) from palmitate. Catalyzes the reduction of the 3-ketoacyl-CoA intermediate that is formed in each cycle of fatty acid elongation. VLCFAs serve as precursors for ceramide and sphingolipids. This Scheffersomyces stipitis (strain ATCC 58785 / CBS 6054 / NBRC 10063 / NRRL Y-11545) (Yeast) protein is Very-long-chain 3-oxoacyl-CoA reductase.